The chain runs to 402 residues: Multidrug resistance protein MdtH (402 aa).

Residues 1–12 (MSRVSQARNLGK) lie on the Cytoplasmic side of the membrane. Residues 13–33 (YFLLIDNMLVVLGFFVVFPLI) form a helical membrane-spanning segment. The Periplasmic segment spans residues 34–98 (SIRFIDQMGW…GFATMGIAHE (65 aa)). Residues 99–116 (PWLLWFSCFLSGLGGTLF) traverse the membrane as a helical segment. The Cytoplasmic segment spans residues 117–138 (DPPRSALVVKLIRPEQRGRFFS). The chain crosses the membrane as a helical span at residues 139-159 (LLMMQDSAGAVIGALLGSWLL). The Periplasmic portion of the chain corresponds to 160 to 164 (QYDFR). A helical membrane pass occupies residues 165–185 (LVCATGAILFILCALFNAWLL). The Cytoplasmic portion of the chain corresponds to 186–213 (PAWKLSTVRTPVREGMRRVMSDKRFVTY). Residues 214–234 (VLTLAGYYMLAVQVMLMLPIM) form a helical membrane-spanning segment. Residues 235–243 (VNDIAGSPA) are Periplasmic-facing. Residues 244–264 (AVKWMYAIEACLSLTLLYPIA) traverse the membrane as a helical segment. At 265-276 (RWSEKRFRLEHR) the chain is on the cytoplasmic side. Residues 277-297 (LMAGLLVMSLSMIPIGMVGNL) form a helical membrane-spanning segment. At 298-299 (QQ) the chain is on the periplasmic side. A helical transmembrane segment spans residues 300–320 (LFTLICAFYIGSVIAEPARET). At 321 to 339 (LSASLADARARGSYMGFSR) the chain is on the cytoplasmic side. The chain crosses the membrane as a helical span at residues 340–360 (LGLAIGGAIGYIGGGWLFDMG). Residues 361-367 (KALTQPE) lie on the Periplasmic side of the membrane. The chain crosses the membrane as a helical span at residues 368–388 (LPWMMLGIIGFITFLALGWQF). Topologically, residues 389–402 (SHKRTPRRMLEPGA) are cytoplasmic.

Belongs to the major facilitator superfamily. DHA1 family. MdtH (TC 2.A.1.2.21) subfamily.

It is found in the cell inner membrane. This Salmonella paratyphi C (strain RKS4594) protein is Multidrug resistance protein MdtH.